Reading from the N-terminus, the 186-residue chain is Ribosome-recycling factor (186 aa).

This sequence belongs to the RRF family.

The protein resides in the cytoplasm. In terms of biological role, responsible for the release of ribosomes from messenger RNA at the termination of protein biosynthesis. May increase the efficiency of translation by recycling ribosomes from one round of translation to another. In Burkholderia ambifaria (strain ATCC BAA-244 / DSM 16087 / CCUG 44356 / LMG 19182 / AMMD) (Burkholderia cepacia (strain AMMD)), this protein is Ribosome-recycling factor.